The following is a 185-amino-acid chain: Ribosome-recycling factor (185 aa).

This sequence belongs to the RRF family.

Its subcellular location is the cytoplasm. Functionally, responsible for the release of ribosomes from messenger RNA at the termination of protein biosynthesis. May increase the efficiency of translation by recycling ribosomes from one round of translation to another. In Laribacter hongkongensis (strain HLHK9), this protein is Ribosome-recycling factor.